A 694-amino-acid polypeptide reads, in one-letter code: DNA-directed RNA polymerase subunit beta' (694 aa).

Residues Cys69, Cys71, Cys87, and Cys90 each coordinate Zn(2+). Residues Asp489, Asp491, and Asp493 each contribute to the Mg(2+) site.

The protein belongs to the RNA polymerase beta' chain family. RpoC1 subfamily. In terms of assembly, in plastids the minimal PEP RNA polymerase catalytic core is composed of four subunits: alpha, beta, beta', and beta''. When a (nuclear-encoded) sigma factor is associated with the core the holoenzyme is formed, which can initiate transcription. Mg(2+) is required as a cofactor. Requires Zn(2+) as cofactor.

The protein localises to the plastid. The protein resides in the chloroplast. It catalyses the reaction RNA(n) + a ribonucleoside 5'-triphosphate = RNA(n+1) + diphosphate. Its function is as follows. DNA-dependent RNA polymerase catalyzes the transcription of DNA into RNA using the four ribonucleoside triphosphates as substrates. This chain is DNA-directed RNA polymerase subunit beta', found in Gossypium barbadense (Sea Island cotton).